Consider the following 197-residue polypeptide: RNA pyrophosphohydrolase (197 aa).

The region spanning 6 to 150 (GYRPNVGIVI…KRDVYRKVMR (145 aa)) is the Nudix hydrolase domain. Positions 38–59 (GGINEGENIETAMYRELYEEVG) match the Nudix box motif.

This sequence belongs to the Nudix hydrolase family. RppH subfamily. It depends on a divalent metal cation as a cofactor.

In terms of biological role, accelerates the degradation of transcripts by removing pyrophosphate from the 5'-end of triphosphorylated RNA, leading to a more labile monophosphorylated state that can stimulate subsequent ribonuclease cleavage. The chain is RNA pyrophosphohydrolase from Haemophilus ducreyi (strain 35000HP / ATCC 700724).